Reading from the N-terminus, the 494-residue chain is Neuronal acetylcholine receptor subunit alpha-6 (494 aa).

The N-terminal stretch at 1 to 25 is a signal peptide; sequence MLTSKGQGFLHGGLCLWLCVFTPFF. The Extracellular portion of the chain corresponds to 26–239; sequence KGCVGCATEE…ITYSFYIRRL (214 aa). Residues Asn-54 and Asn-171 are each glycosylated (N-linked (GlcNAc...) asparagine). 2 disulfides stabilise this stretch: Cys-158–Cys-172 and Cys-222–Cys-223. 3 consecutive transmembrane segments (helical) span residues 240 to 264, 272 to 290, and 306 to 327; these read PMFY…VFYL, VTLC…LVIT, and YLLF…VLNI. Residues 328–465 are Cytoplasmic-facing; sequence HYRTPTTHTM…WKYVAMVVDR (138 aa). Ser-401 carries the post-translational modification Phosphoserine. Residues 466–484 traverse the membrane as a helical segment; it reads VFLWVFIIVCVFGTAGLFL.

This sequence belongs to the ligand-gated ion channel (TC 1.A.9) family. Acetylcholine receptor (TC 1.A.9.1) subfamily. Alpha-6/CHRNA6 sub-subfamily. In terms of assembly, neuronal AChR is composed of two different types of subunits: alpha and non-alpha (beta). CHRNA6/alpha-6 subunit can be combined to CHRNB2/beta-2, CHRNA4/alpha-4 and CHRNB3/beta-3 to give rise to functional receptors. Heteropentamers containing CHRNB3 have an stoichiometry of (CHRNA6:CHRNB2)2:CHRNB3. Interacts with LYPD6.

It localises to the synaptic cell membrane. It catalyses the reaction Ca(2+)(in) = Ca(2+)(out). It carries out the reaction K(+)(in) = K(+)(out). The catalysed reaction is Na(+)(in) = Na(+)(out). With respect to regulation, activated by a myriad of ligands such as acetylcholine, cytisine and nicotine. CHRNA6 nAChR activity is inhibited by the antagonists alpha-conotoxin MII and PIA, a small disulfide-constrained peptides from cone snails. Its function is as follows. Component of neuronal acetylcholine receptors (nAChRs) that function as pentameric, ligand-gated cation channels with high calcium permeability among other activities. nAChRs are excitatory neurotrasnmitter receptors formed by a collection of nAChR subunits known to mediate synaptic transmission in the nervous system and the neuromuscular junction. Each nAchR subunit confers differential attributes to channel properties, including activation, deactivation and desensitization kinetics, pH sensitivity, cation permeability, and binding to allosteric modulators. CHRNA6 forms pentameric channels with CHRNB2, CHRNB3 and CHRNA4 that exhibit high sensitivity to ACh and nicotine and are predominantly expressed in only a few brain areas, including dopaminergic neurons, norepirephrine neurons and cells of the visual system. nAChrs containing CHRNA6 subunits mediate endogenous cholinergic modulation of dopamine and gamma-aminobutyric acid (GABA) release in response to nicotine at nerve terminals. The sequence is that of Neuronal acetylcholine receptor subunit alpha-6 (CHRNA6) from Pan troglodytes (Chimpanzee).